A 318-amino-acid polypeptide reads, in one-letter code: Aspartate carbamoyltransferase catalytic subunit (318 aa).

Positions 64 and 65 each coordinate carbamoyl phosphate. Lys92 contacts L-aspartate. 3 residues coordinate carbamoyl phosphate: Arg114, His142, and Gln145. The L-aspartate site is built by Arg175 and Arg229. Carbamoyl phosphate-binding residues include Gly270 and Pro271.

The protein belongs to the aspartate/ornithine carbamoyltransferase superfamily. ATCase family. As to quaternary structure, heterododecamer (2C3:3R2) of six catalytic PyrB chains organized as two trimers (C3), and six regulatory PyrI chains organized as three dimers (R2).

The catalysed reaction is carbamoyl phosphate + L-aspartate = N-carbamoyl-L-aspartate + phosphate + H(+). The protein operates within pyrimidine metabolism; UMP biosynthesis via de novo pathway; (S)-dihydroorotate from bicarbonate: step 2/3. In terms of biological role, catalyzes the condensation of carbamoyl phosphate and aspartate to form carbamoyl aspartate and inorganic phosphate, the committed step in the de novo pyrimidine nucleotide biosynthesis pathway. This is Aspartate carbamoyltransferase catalytic subunit from Rhodospirillum centenum (strain ATCC 51521 / SW).